Consider the following 385-residue polypeptide: 4-hydroxy-3-methylbut-2-en-1-yl diphosphate synthase (flavodoxin) (385 aa).

[4Fe-4S] cluster-binding residues include Cys280, Cys283, Cys315, and Glu322.

This sequence belongs to the IspG family. It depends on [4Fe-4S] cluster as a cofactor.

It carries out the reaction (2E)-4-hydroxy-3-methylbut-2-enyl diphosphate + oxidized [flavodoxin] + H2O + 2 H(+) = 2-C-methyl-D-erythritol 2,4-cyclic diphosphate + reduced [flavodoxin]. It functions in the pathway isoprenoid biosynthesis; isopentenyl diphosphate biosynthesis via DXP pathway; isopentenyl diphosphate from 1-deoxy-D-xylulose 5-phosphate: step 5/6. Functionally, converts 2C-methyl-D-erythritol 2,4-cyclodiphosphate (ME-2,4cPP) into 1-hydroxy-2-methyl-2-(E)-butenyl 4-diphosphate. In Streptomyces griseus subsp. griseus (strain JCM 4626 / CBS 651.72 / NBRC 13350 / KCC S-0626 / ISP 5235), this protein is 4-hydroxy-3-methylbut-2-en-1-yl diphosphate synthase (flavodoxin).